A 250-amino-acid chain; its full sequence is tRNA (guanine-N(1)-)-methyltransferase (250 aa).

S-adenosyl-L-methionine contacts are provided by residues G113 and 134 to 139 (IGDYVL).

It belongs to the RNA methyltransferase TrmD family. In terms of assembly, homodimer.

It localises to the cytoplasm. The enzyme catalyses guanosine(37) in tRNA + S-adenosyl-L-methionine = N(1)-methylguanosine(37) in tRNA + S-adenosyl-L-homocysteine + H(+). In terms of biological role, specifically methylates guanosine-37 in various tRNAs. The chain is tRNA (guanine-N(1)-)-methyltransferase from Buchnera aphidicola subsp. Baizongia pistaciae (strain Bp).